The sequence spans 440 residues: Transposon Ty1-GR1 Gag polyprotein (440 aa).

Positions Met1–Ser16 are enriched in low complexity. Disordered regions lie at residues Met1 to Gln93, Pro126 to Pro173, and Gly352 to Tyr440. Composition is skewed to polar residues over residues Thr48–Ser60, Ser71–Gln93, and Gln127–Phe152. Residues Thr153–Thr165 are compositionally biased toward low complexity. Positions Asn299–His401 are RNA-binding. Residues Asn402–Ser418 are compositionally biased toward low complexity. At Ser416 the chain carries Phosphoserine. Over residues Lys419–Asn428 the composition is skewed to polar residues. The segment covering Asn429–Tyr440 has biased composition (basic and acidic residues).

As to quaternary structure, homotrimer.

The protein localises to the cytoplasm. In terms of biological role, capsid protein (CA) is the structural component of the virus-like particle (VLP), forming the shell that encapsulates the retrotransposons dimeric RNA genome. The particles are assembled from trimer-clustered units and there are holes in the capsid shells that allow for the diffusion of macromolecules. CA also has nucleocapsid-like chaperone activity, promoting primer tRNA(i)-Met annealing to the multipartite primer-binding site (PBS), dimerization of Ty1 RNA and initiation of reverse transcription. The chain is Transposon Ty1-GR1 Gag polyprotein (TY1A-GR1) from Saccharomyces cerevisiae (strain ATCC 204508 / S288c) (Baker's yeast).